Reading from the N-terminus, the 366-residue chain is Dual-specificity RNA methyltransferase RlmN (366 aa).

The active-site Proton acceptor is the Glu-102. One can recognise a Radical SAM core domain in the interval 108–340 (DEGRNTLCVS…TTTRKTRGRD (233 aa)). Cys-115 and Cys-345 are oxidised to a cystine. [4Fe-4S] cluster is bound by residues Cys-122, Cys-126, and Cys-129. Residues 171–172 (GE), Ser-203, 225–227 (SLH), and Asn-302 contribute to the S-adenosyl-L-methionine site. Cys-345 acts as the S-methylcysteine intermediate in catalysis.

Belongs to the radical SAM superfamily. RlmN family. [4Fe-4S] cluster is required as a cofactor.

The protein resides in the cytoplasm. It catalyses the reaction adenosine(2503) in 23S rRNA + 2 reduced [2Fe-2S]-[ferredoxin] + 2 S-adenosyl-L-methionine = 2-methyladenosine(2503) in 23S rRNA + 5'-deoxyadenosine + L-methionine + 2 oxidized [2Fe-2S]-[ferredoxin] + S-adenosyl-L-homocysteine. The catalysed reaction is adenosine(37) in tRNA + 2 reduced [2Fe-2S]-[ferredoxin] + 2 S-adenosyl-L-methionine = 2-methyladenosine(37) in tRNA + 5'-deoxyadenosine + L-methionine + 2 oxidized [2Fe-2S]-[ferredoxin] + S-adenosyl-L-homocysteine. Functionally, specifically methylates position 2 of adenine 2503 in 23S rRNA and position 2 of adenine 37 in tRNAs. m2A2503 modification seems to play a crucial role in the proofreading step occurring at the peptidyl transferase center and thus would serve to optimize ribosomal fidelity. This chain is Dual-specificity RNA methyltransferase RlmN, found in Methylococcus capsulatus (strain ATCC 33009 / NCIMB 11132 / Bath).